A 595-amino-acid polypeptide reads, in one-letter code: Proline--tRNA ligase (595 aa).

This sequence belongs to the class-II aminoacyl-tRNA synthetase family. ProS type 1 subfamily. As to quaternary structure, homodimer.

It is found in the cytoplasm. The catalysed reaction is tRNA(Pro) + L-proline + ATP = L-prolyl-tRNA(Pro) + AMP + diphosphate. Functionally, catalyzes the attachment of proline to tRNA(Pro) in a two-step reaction: proline is first activated by ATP to form Pro-AMP and then transferred to the acceptor end of tRNA(Pro). As ProRS can inadvertently accommodate and process non-cognate amino acids such as alanine and cysteine, to avoid such errors it has two additional distinct editing activities against alanine. One activity is designated as 'pretransfer' editing and involves the tRNA(Pro)-independent hydrolysis of activated Ala-AMP. The other activity is designated 'posttransfer' editing and involves deacylation of mischarged Ala-tRNA(Pro). The misacylated Cys-tRNA(Pro) is not edited by ProRS. In Treponema denticola (strain ATCC 35405 / DSM 14222 / CIP 103919 / JCM 8153 / KCTC 15104), this protein is Proline--tRNA ligase.